The following is a 189-amino-acid chain: WASH complex subunit homolog 3 (189 aa).

Positions Met35 to Met74 form a coiled coil. Disordered stretches follow at residues Leu76–Ser101 and Ser150–Asp189. The segment covering Ser150–Ser165 has biased composition (basic and acidic residues). Polar residues predominate over residues Pro167–Asp189. Residue Thr182 is modified to Phosphothreonine.

The protein belongs to the CCDC53 family. Probable component of the WASH complex. Component of the DHIC (ddl-1-containing hsf-1 inhibitory complex), which contains at least ddl-1, ddl-2, hsb-1 and hsf-1. Within the complex, interacts with ddl-2. Within the complex, interacts with hsb-1. Within the complex, interacts with hsf-1. Formation of the DHIC may be dependent upon the Insulin/IGF-1-like signaling (IIS) mediated pathway. Post-translationally, phosphorylated. Phosphorylation on Thr-182 may promote DHIC complex dissociation and consequently the activation of heat-shock transcription factor hsf-1. Phosphorylation is modulated by the Insulin/IGF-1-like signaling (IIS) mediated pathway. Expressed in pharynx, intestine, body wall muscles, vulva muscles, spermatheca, and several head and tail neurons.

Acts as a component of the WASH core complex that functions as a nucleation-promoting factor (NPF) at the surface of endosomes, where it recruits and activates the Arp2/3 complex to induce actin polymerization, playing a key role in the fission of tubules that serve as transport intermediates during endosome sorting. Acts as a component of the DHIC (ddl-1-containing hsf-1 inhibitory complex) which modulates lifespan by sequestering the heat-shock transcription factor hsf-1 to negatively regulate its binding to DNA and its transcriptional activity. This Caenorhabditis elegans protein is WASH complex subunit homolog 3 (ddl-1).